The following is a 432-amino-acid chain: Glutamyl-tRNA reductase (432 aa).

Residues 49 to 52 (TCNR), S101, 106 to 108 (EPQ), and Q112 contribute to the substrate site. The active-site Nucleophile is C50. 181–186 (GAGETI) is a binding site for NADP(+). Residues 407 to 432 (FPEKPGYQHPPIATPIVRTDDADPAP) are disordered.

The protein belongs to the glutamyl-tRNA reductase family. In terms of assembly, homodimer.

The enzyme catalyses (S)-4-amino-5-oxopentanoate + tRNA(Glu) + NADP(+) = L-glutamyl-tRNA(Glu) + NADPH + H(+). It participates in porphyrin-containing compound metabolism; protoporphyrin-IX biosynthesis; 5-aminolevulinate from L-glutamyl-tRNA(Glu): step 1/2. Its function is as follows. Catalyzes the NADPH-dependent reduction of glutamyl-tRNA(Glu) to glutamate 1-semialdehyde (GSA). In Xanthomonas oryzae pv. oryzae (strain PXO99A), this protein is Glutamyl-tRNA reductase.